A 710-amino-acid chain; its full sequence is Prolyl endopeptidase (710 aa).

An N-acetylmethionine modification is found at Met1. Lys157 bears the N6-acetyllysine mark. Catalysis depends on charge relay system residues Ser554, Asp641, and His680.

Belongs to the peptidase S9A family. As to expression, expressed in all tissues tested: uterus, kidney, heart, lung, small intestine, smooth muscle, liver, spleen, thymus, adrenal, pituitary and whole brain.

It localises to the cytoplasm. The enzyme catalyses Hydrolysis of Pro-|-Xaa &gt;&gt; Ala-|-Xaa in oligopeptides.. With respect to regulation, inhibited by DFP, Z-Pro-prolinal and poststatin, but not by PMSF, SBTI, EDTA, leupeptin, E-64 and pepstatin. Functionally, cleaves peptide bonds on the C-terminal side of prolyl residues within peptides that are up to approximately 30 amino acids long. Has high activity on the succinyl- (suc-) peptide-4-methylcoumaryl-7-amide (MCA) substrates suc-Gly-Pro-Leu-Gly-Pro-MCA, suc-Gly-Pro-MCA and suc-Ala-Ala-Ala-MCA. The polypeptide is Prolyl endopeptidase (Rattus norvegicus (Rat)).